Consider the following 830-residue polypeptide: GPI ethanolamine phosphate transferase 2 (830 aa).

An N-terminal signal peptide occupies residues Met-1–Thr-32. At Gly-33–Asp-321 the chain is on the lumenal side. Residues Asn-145, Asn-185, and Asn-298 are each glycosylated (N-linked (GlcNAc...) asparagine). A helical membrane pass occupies residues Ile-322–Ile-342. The Cytoplasmic segment spans residues Ile-343 to Pro-405. A helical membrane pass occupies residues Leu-406 to Leu-426. At Arg-427–Ser-439 the chain is on the lumenal side. The helical transmembrane segment at Ser-440–Ile-460 threads the bilayer. Over Glu-461–Trp-469 the chain is Cytoplasmic. A helical transmembrane segment spans residues Ile-470 to Val-490. The Lumenal segment spans residues Arg-491–Asn-533. N-linked (GlcNAc...) asparagine glycosylation is present at Asn-506. Residues Met-534–Val-554 form a helical membrane-spanning segment. At Thr-555–Asn-598 the chain is on the cytoplasmic side. A helical membrane pass occupies residues Leu-599 to Val-619. Topologically, residues Leu-620–Asn-651 are lumenal. Residues Ile-652–Ile-672 traverse the membrane as a helical segment. The Cytoplasmic segment spans residues Pro-673–Lys-682. Residues Ile-683–Gly-703 form a helical membrane-spanning segment. The Lumenal portion of the chain corresponds to Thr-704 to Asn-724. A helical membrane pass occupies residues Ile-725 to Met-745. The Cytoplasmic segment spans residues Leu-746–Lys-768. The chain crosses the membrane as a helical span at residues Leu-769–Leu-789. Residues Arg-790–Tyr-805 lie on the Lumenal side of the membrane. A helical transmembrane segment spans residues Phe-806–Leu-826. Over Cys-827–Asp-830 the chain is Cytoplasmic.

The protein belongs to the PIGG/PIGN/PIGO family. PIGG subfamily. In terms of processing, N-glycosylated.

The protein localises to the endoplasmic reticulum membrane. Its pathway is glycolipid biosynthesis; glycosylphosphatidylinositol-anchor biosynthesis. Its function is as follows. Ethanolamine phosphate transferase involved in glycosylphosphatidylinositol-anchor biosynthesis. Transfers ethanolamine phosphate to the GPI second mannose. Although not essential, addition of ethanolamine phosphate to the second mannose plays an important role in cell separation via the GPI-based modification of daughter-specific proteins. The protein is GPI ethanolamine phosphate transferase 2 (LAS21) of Saccharomyces cerevisiae (strain ATCC 204508 / S288c) (Baker's yeast).